We begin with the raw amino-acid sequence, 276 residues long: NAD-capped RNA hydrolase NudC (276 aa).

A substrate-binding site is contributed by Arg-82. The Zn(2+) site is built by Cys-112 and Cys-115. Glu-125 provides a ligand contact to substrate. Zn(2+)-binding residues include Cys-130 and Cys-133. Tyr-138 contacts substrate. Residues 139 to 262 enclose the Nudix hydrolase domain; the sequence is PRISPSMIVL…SIARYLIDVY (124 aa). The a divalent metal cation site is built by Ala-172, Glu-188, and Glu-192. The short motif at 173-194 is the Nudix box element; sequence GFAEPGESAEDCLIREVREEVQ. A substrate-binding site is contributed by 206 to 213; it reads QCWPFPHS. Glu-233 contacts a divalent metal cation. Ala-255 provides a ligand contact to substrate.

Belongs to the Nudix hydrolase family. NudC subfamily. As to quaternary structure, homodimer. Mg(2+) serves as cofactor. Requires Mn(2+) as cofactor. It depends on Zn(2+) as a cofactor.

The enzyme catalyses a 5'-end NAD(+)-phospho-ribonucleoside in mRNA + H2O = a 5'-end phospho-adenosine-phospho-ribonucleoside in mRNA + beta-nicotinamide D-ribonucleotide + 2 H(+). It carries out the reaction NAD(+) + H2O = beta-nicotinamide D-ribonucleotide + AMP + 2 H(+). The catalysed reaction is NADH + H2O = reduced beta-nicotinamide D-ribonucleotide + AMP + 2 H(+). In terms of biological role, mRNA decapping enzyme that specifically removes the nicotinamide adenine dinucleotide (NAD) cap from a subset of mRNAs by hydrolyzing the diphosphate linkage to produce nicotinamide mononucleotide (NMN) and 5' monophosphate mRNA. The NAD-cap is present at the 5'-end of some mRNAs and stabilizes RNA against 5'-processing. Has preference for mRNAs with a 5'-end purine. Catalyzes the hydrolysis of a broad range of dinucleotide pyrophosphates. The polypeptide is NAD-capped RNA hydrolase NudC (Pseudomonas fluorescens (strain Pf0-1)).